We begin with the raw amino-acid sequence, 294 residues long: Protein C3orf33 (294 aa).

A2 bears the N-acetylalanine mark. The chain crosses the membrane as a helical span at residues 40 to 56 (ISTGMAIAGIMLLLRSI).

Highly expressed in ileocecal tissue and endometrium.

Its subcellular location is the membrane. It localises to the secreted. In terms of biological role, secreted protein may play a role in transcription regulation via the MAPK3/MAPK1 pathway through an unidentified receptor on the plasma membrane. The protein is Protein C3orf33 (C3orf33) of Homo sapiens (Human).